Reading from the N-terminus, the 491-residue chain is tRNA-2-methylthio-N(6)-dimethylallyladenosine synthase (491 aa).

In terms of domain architecture, MTTase N-terminal spans R3–H119. [4Fe-4S] cluster contacts are provided by C12, C48, C82, C156, C160, and C163. In terms of domain architecture, Radical SAM core spans R142 to D372. In terms of domain architecture, TRAM spans K375–I446.

Belongs to the methylthiotransferase family. MiaB subfamily. In terms of assembly, monomer. [4Fe-4S] cluster serves as cofactor.

It is found in the cytoplasm. It carries out the reaction N(6)-dimethylallyladenosine(37) in tRNA + (sulfur carrier)-SH + AH2 + 2 S-adenosyl-L-methionine = 2-methylsulfanyl-N(6)-dimethylallyladenosine(37) in tRNA + (sulfur carrier)-H + 5'-deoxyadenosine + L-methionine + A + S-adenosyl-L-homocysteine + 2 H(+). Catalyzes the methylthiolation of N6-(dimethylallyl)adenosine (i(6)A), leading to the formation of 2-methylthio-N6-(dimethylallyl)adenosine (ms(2)i(6)A) at position 37 in tRNAs that read codons beginning with uridine. The chain is tRNA-2-methylthio-N(6)-dimethylallyladenosine synthase from Saccharopolyspora erythraea (strain ATCC 11635 / DSM 40517 / JCM 4748 / NBRC 13426 / NCIMB 8594 / NRRL 2338).